Here is a 314-residue protein sequence, read N- to C-terminus: MQTASLKNGTLKIGTRGSKLALAQAYETRRRLMEAHGLPEEAIEIIPMSTAGDRIQDRALSEIGGKGLFTEEIEQALTDGRIDLAVHSTKDMPTVLPDGLHLSVFLEREDPRDAFIGRTASRLLDLPQGATVGSSSLRRQALIRRLRPDIQVVIFRGNVDTRLRKLEAGEVDGTFLACAGLRRLGLGDVITDLADPESFPPAPGQGAIGIETRIGDTRIDTLLAPLAHRETGIALACERAFLAALDGSCRTPIAGLATVNGDTVSFHGMILKPDGSEAHEIKTEGPASNAAAIGTEAAEHLRAKAGPQFFEGWE.

An S-(dipyrrolylmethanemethyl)cysteine modification is found at Cys-249.

This sequence belongs to the HMBS family. Monomer. Requires dipyrromethane as cofactor.

The enzyme catalyses 4 porphobilinogen + H2O = hydroxymethylbilane + 4 NH4(+). It functions in the pathway porphyrin-containing compound metabolism; protoporphyrin-IX biosynthesis; coproporphyrinogen-III from 5-aminolevulinate: step 2/4. Tetrapolymerization of the monopyrrole PBG into the hydroxymethylbilane pre-uroporphyrinogen in several discrete steps. This chain is Porphobilinogen deaminase, found in Brucella anthropi (strain ATCC 49188 / DSM 6882 / CCUG 24695 / JCM 21032 / LMG 3331 / NBRC 15819 / NCTC 12168 / Alc 37) (Ochrobactrum anthropi).